The following is a 393-amino-acid chain: Histidinol dehydrogenase (393 aa).

3 residues coordinate NAD(+): tyrosine 112, glutamine 171, and asparagine 194. The substrate site is built by threonine 217, glutamine 239, and histidine 242. Zn(2+) contacts are provided by glutamine 239 and histidine 242. Residues glutamate 293 and histidine 294 each act as proton acceptor in the active site. Substrate is bound by residues histidine 294, aspartate 326, glutamate 379, and histidine 384. Aspartate 326 is a binding site for Zn(2+). Histidine 384 lines the Zn(2+) pocket.

The protein belongs to the histidinol dehydrogenase family. Zn(2+) serves as cofactor.

It catalyses the reaction L-histidinol + 2 NAD(+) + H2O = L-histidine + 2 NADH + 3 H(+). Its pathway is amino-acid biosynthesis; L-histidine biosynthesis; L-histidine from 5-phospho-alpha-D-ribose 1-diphosphate: step 9/9. Its function is as follows. Catalyzes the sequential NAD-dependent oxidations of L-histidinol to L-histidinaldehyde and then to L-histidine. The sequence is that of Histidinol dehydrogenase from Sulfolobus acidocaldarius (strain ATCC 33909 / DSM 639 / JCM 8929 / NBRC 15157 / NCIMB 11770).